A 426-amino-acid chain; its full sequence is Glutamate-1-semialdehyde 2,1-aminomutase (426 aa).

At K265 the chain carries N6-(pyridoxal phosphate)lysine.

This sequence belongs to the class-III pyridoxal-phosphate-dependent aminotransferase family. HemL subfamily. As to quaternary structure, homodimer. Pyridoxal 5'-phosphate is required as a cofactor.

It is found in the cytoplasm. It catalyses the reaction (S)-4-amino-5-oxopentanoate = 5-aminolevulinate. Its pathway is porphyrin-containing compound metabolism; protoporphyrin-IX biosynthesis; 5-aminolevulinate from L-glutamyl-tRNA(Glu): step 2/2. The sequence is that of Glutamate-1-semialdehyde 2,1-aminomutase from Neisseria gonorrhoeae (strain NCCP11945).